The chain runs to 86 residues: MAKLHFSLVAPERELFSGEVDMVQAPGAEGDFGVLANHAPFMTTLREGKVTVKDGATTKVFDIQGGFADVGPEGLTILAEHAVEAA.

It belongs to the ATPase epsilon chain family. F-type ATPases have 2 components, CF(1) - the catalytic core - and CF(0) - the membrane proton channel. CF(1) has five subunits: alpha(3), beta(3), gamma(1), delta(1), epsilon(1). CF(0) has three main subunits: a, b and c.

The protein localises to the cell inner membrane. Its function is as follows. Produces ATP from ADP in the presence of a proton gradient across the membrane. The sequence is that of ATP synthase epsilon chain (atpC) from Caulobacter vibrioides (strain ATCC 19089 / CIP 103742 / CB 15) (Caulobacter crescentus).